The following is a 229-amino-acid chain: Predicted GPI-anchored protein 19 (229 aa).

An N-terminal signal peptide occupies residues 1–20 (MFSTTSIVLWFTILLPVTLP). The disordered stretch occupies residues 63 to 92 (DNEQVLRKSKKKKKTTSTGTPGNENTTDFA). A compositionally biased stretch (polar residues) spans 81-92 (GTPGNENTTDFA). Residues Asn-87, Asn-184, and Asn-189 are each glycosylated (N-linked (GlcNAc...) asparagine). The GPI-anchor amidated glycine moiety is linked to residue Gly-208. Residues 209 to 229 (FGSLIPYNSFYLYILLFCIIF) constitute a propeptide, removed in mature form.

The protein resides in the cell membrane. In terms of biological role, predicted GPI-anchored protein which may have a role during host infection. The protein is Predicted GPI-anchored protein 19 (PGA19) of Candida albicans (strain SC5314 / ATCC MYA-2876) (Yeast).